Reading from the N-terminus, the 333-residue chain is Taste receptor type 2 member 38 (333 aa).

Residues 1-17 (MLTLTHICTVSYEVRST) lie on the Extracellular side of the membrane. Residues 18-38 (FLFISVLEFAVGFLTNAFISL) form a helical membrane-spanning segment. Residues 39-55 (VNFWDVVKRQPLSNSDC) are Cytoplasmic-facing. The helical transmembrane segment at 56–76 (VLLCLSISRLFLHGLLFLSAI) threads the bilayer. Residues 77 to 94 (QLTHFQKLSEPLNHSYQV) are Extracellular-facing. A helical membrane pass occupies residues 95–115 (ILMLWMIANQANLWLAACLSL). Topologically, residues 116–142 (LYCSKLIRFSHTFLICLASWVSRKISQ) are cytoplasmic. The helical transmembrane segment at 143–163 (MLLGIILCSCICTVLCVWCFF) threads the bilayer. The Extracellular segment spans residues 164-190 (GRLHFTVTTVLFMNNNTRLNWQIKDLN). Asn178 is a glycosylation site (N-linked (GlcNAc...) asparagine). Residues 191-211 (LFYSFLFCYLWSVPPFLLFLV) traverse the membrane as a helical segment. Topologically, residues 212-251 (SSGMLTVSLGRHMRTMKVYTRDSRDPSLEAHIKALKSLVS) are cytoplasmic. A helical membrane pass occupies residues 252-272 (FFCFFVISSCAAFISVPLLIL). The Extracellular portion of the chain corresponds to 273 to 276 (WHDK). The helical transmembrane segment at 277–297 (IGVMVCVGIMAACPSGHAAVL) threads the bilayer. Residues 298–333 (ISGNAKLRRAVTTILLWAQSSLKVRADHMADSRTLC) are Cytoplasmic-facing.

It belongs to the G-protein coupled receptor T2R family.

Its subcellular location is the membrane. Functionally, receptor that may play a role in the perception of bitterness and is gustducin-linked. May play a role in sensing the chemical composition of the gastrointestinal content. The activity of this receptor may stimulate alpha gustducin, mediate PLC-beta-2 activation and lead to the gating of TRPM5. The protein is Taste receptor type 2 member 38 (TAS2R38) of Papio hamadryas (Hamadryas baboon).